Here is a 522-residue protein sequence, read N- to C-terminus: Occludin (522 aa).

The segment at 1 to 20 (MSSRPLESPPPYRPDEFKPN) is disordered. Topologically, residues 1–66 (MSSRPLESPP…KWTSPPGVIR (66 aa)) are cytoplasmic. An MARVEL domain is found at 60 to 269 (SPPGVIRILS…IIFFAVKTRR (210 aa)). Residues 67–89 (ILSMLIIVMCIAIFACVASTLAW) form a helical membrane-spanning segment. The Extracellular segment spans residues 90 to 135 (DRGYGTSLLGGSVGYPYGGSGFGSYGSGYGYGYGYGYGYGGYTDPR). A helical transmembrane segment spans residues 136 to 160 (AAKGFMLAMAAFCFIAALVIFVTSV). Topologically, residues 161–170 (IRSEMSRTRR) are cytoplasmic. The chain crosses the membrane as a helical span at residues 171–195 (YYLSVIIVSAILGIMVFIATIVYIM). Topologically, residues 196–243 (GVNPTAQSSGSLYGSQIYALCNQFYTPAATGLYVDQYLYHYCVVDPQE) are extracellular. Residues Cys216 and Cys237 are joined by a disulfide bond. The helical transmembrane segment at 244 to 265 (AIAIVLGFMIIVAFALIIFFAV) threads the bilayer. The Cytoplasmic portion of the chain corresponds to 266-522 (KTRRKMDRYD…MVGDYDRQKT (257 aa)). Phosphoserine is present on Ser302. Thr305 carries the phosphothreonine modification. A phosphoserine mark is found at Ser313, Ser321, and Ser340. The disordered stretch occupies residues 360 to 407 (VDDFRQPRYSSGGNFETPSKRAPAKGRAGRSKRTEQDHYETDYTTGGE). Residues 367–376 (RYSSGGNFET) are compositionally biased toward polar residues. A Phosphotyrosine modification is found at Tyr368. A phosphoserine mark is found at Ser369 and Ser370. A compositionally biased stretch (basic residues) spans 381–390 (APAKGRAGRS). Over residues 391-400 (KRTEQDHYET) the composition is skewed to basic and acidic residues. 2 positions are modified to phosphotyrosine: Tyr398 and Tyr402. Residues Thr403 and Thr404 each carry the phosphothreonine; by PKC/PRKCH modification. Residue Ser408 is modified to Phosphoserine. In terms of domain architecture, OCEL spans 414–522 (EDWIREYPPI…MVGDYDRQKT (109 aa)). A coiled-coil region spans residues 426 to 489 (DQQRQLYKRN…EYNRLKQVKG (64 aa)). Residue Ser490 is modified to Phosphoserine.

It belongs to the ELL/occludin family. In terms of assembly, interacts with TJP1/ZO1. Interacts with VAPA. Interacts with CLDN1, CLDN6, CLDN9, CLDN11, CLDN12 and CLDN17. Interacts with PLSCR1. Interacts with LSR, ILDR1 and ILDR2. Interacts with TJP2/ZO2. In terms of processing, dephosphorylated by PTPRJ. The tyrosine phosphorylation on Tyr-398 and Tyr-402 reduces its ability to interact with TJP1. Phosphorylation at Ser-490 also attenuates the interaction with TJP1. (Microbial infection) Cleaved by S.pyogenes SpeB protease; leading to its degradation. Degradation by SpeB promotes bacterial translocation across the host epithelial barrier. Localized at tight junctions of both epithelial and endothelial cells. Highly expressed in kidney. Not detected in testis.

It localises to the cell membrane. Its subcellular location is the cell junction. The protein resides in the tight junction. In terms of biological role, may play a role in the formation and regulation of the tight junction (TJ) paracellular permeability barrier. It is able to induce adhesion when expressed in cells lacking tight junctions. Functionally, (Microbial infection) Acts as a coreceptor for hepatitis C virus (HCV) in hepatocytes. This is Occludin (OCLN) from Homo sapiens (Human).